The chain runs to 616 residues: Angiotensin-converting enzyme (616 aa).

Positions 1-23 (MNLINFSYLNLLFGAGLFSVLES) are cleaved as a signal peptide. The 584-residue stretch at 27 to 610 (LNTESDAKKW…PRAENWMGGK (584 aa)) folds into the Peptidase M2 domain. 2 N-linked (GlcNAc...) asparagine glycosylation sites follow: N61 and N96. The cysteines at positions 142 and 152 are disulfide-linked. Residues R180 and Y218 each contribute to the chloride site. N303 carries an N-linked (GlcNAc...) asparagine glycan. A disulfide bond links C345 and C363. H376 contributes to the Zn(2+) binding site. The active-site Proton acceptor is E377. Zn(2+)-binding residues include H380 and E404. N428 carries an N-linked (GlcNAc...) asparagine glycan. W478 and R482 together coordinate chloride. H506 (proton donor) is an active-site residue. R515 lines the chloride pocket. C531 and C543 form a disulfide bridge. 2 N-linked (GlcNAc...) asparagine glycosylation sites follow: N535 and N573.

Belongs to the peptidase M2 family. Zn(2+) is required as a cofactor. It depends on chloride as a cofactor. As to expression, epithelial cells of the midgut.

It is found in the secreted. The protein resides in the extracellular space. The catalysed reaction is Release of a C-terminal dipeptide, oligopeptide-|-Xaa-Yaa, when Xaa is not Pro, and Yaa is neither Asp nor Glu. Thus, conversion of angiotensin I to angiotensin II, with increase in vasoconstrictor activity, but no action on angiotensin II.. Its activity is regulated as follows. Activated by chloride. Inhibited by captopril and lisinopril, and to a lesser extent by delaprilat. This chain is Angiotensin-converting enzyme (ACE), found in Theromyzon tessulatum (Duck leech).